Reading from the N-terminus, the 1410-residue chain is MPPHPNTTKENIPSLVKATPGAQSLRWMLLFAFLCSLVGNAYGTHHQHHGHQHLHHQVRDVKASATPTVTSSSSSSLPSTLEEAKEIIKNAQASLAVMNKGRLAYPQWNQYIAQPKSKNGTSPVAPALGTEHLATNHAMIAKIALNESKTEDQSSQKFSYTIPSGVAHAAKLVAEASPQSPGSHGVDIAAIRRKYRPQRNDTNRPAQKYAQSNGLDGYVHAQAPMNSALDSDSGDDESQLTKRSSADFWLTTMTQRGSSPYAPEGYKVWRNVKEYGAKGDGVTDDTAAINLAVSDGGRCGADCGSSTIYPAQVYFPPGTYLVSSPIIQYFNTEFLGNPLDYPTILAASSFVGLGVITSDVYTGDTTEWYINTNNFLRSVRNFNVDVTRTPQDAYVCGIHWQVAQGTSLENMVFYMSQDAATTQQGVYMENGSGGFITNLTFVGGNFGAYFGNQQFTTSELTFINAKNALQVHWDWAWTMQDVIIENCVNGLVIVGGAGGSMSTGQSVGSLILMDALIVNATNGIVTSLFAENSTSFLLQNSVFRDVTTAVLDSAQGTEILAGGAAFGVESWGFGRVATSSTNSTFYNGQDIPVMERPVSLTYMGYDKPNFFQRRRPAYTNIGNTQIIDVKEWGAAGDGTTNDGPILNSILDRAANLSAIVFIPHGIYIVEDTLHIPVGSRIIGQAWSQIMMKGSKFENQLKPRVGVQVGQVGDVGIIEIQSLLFTVSGPTAGAVLVEWNVHQSTQGSAAMWDSHFRVGGAKGSSLQTSQCDKSDTAVNTACVAASLLLHITSQSSAYLENIWAWTADHDLDTTAQEQINIYSGRGILVESQGPTWLYGTSSEHNVLYQYQVSNAKDLYMGMIQTESPYFQPTPHAPQPFKAGLFSNDPVFADCDSSSANCFASWALRIIDSSSVYIMGTEDCQQRAFEISQSTDTWIYNLVTKGIVEMISPVNEDPTLAANNVNGFMSSILAWVRGSNSTIGERTFPGFQIYTADSLEGQGLTESCTPALTQKVLCSPFLKTWTSPGIGQYYKNTTFTDMLCDAGCGESLGSYVDNVETYCANQTIGSSIPTRNGGTIYHNYNLTCLEDKDTKEYCLDTIMDFTTVESAKDMPTNELCSYCYTTMLEMRQASIYSSYTESDKETLELIQSTCGLTGPTELHDPPYTVTPTPDPVCVSNTTYTTQPGDTCDKLAKQYSVASAAILYANPTIIGNCSDLPASRDICMPLGCDTQYTLQDDDNCWQLQRDYGLGPDSIRQYNPWLDSDCLNMQGAREILGSVLCLSPQGATHNTTGDGITTTPGNGEYAQGVVSPPENSTVAPGTTTKCGRWYSATADDLCVQICLKSGVSAKLFKAANPSLAADCDNSLIAGDAYCVGPVPRWNDTAYWIETATSSKAVSTPLASAKATGSV.

2 LysM domains span residues 1179 to 1225 and 1231 to 1277; these read TTYT…DICM and TQYT…EILG. Residues 1291-1303 show a composition bias toward low complexity; that stretch reads TTGDGITTTPGNG. The tract at residues 1291–1317 is disordered; the sequence is TTGDGITTTPGNGEYAQGVVSPPENST. The 48-residue stretch at 1328 to 1375 folds into the LysM 3 domain; sequence RWYSATADDLCVQICLKSGVSAKLFKAANPSLAADCDNSLIAGDAYCV.

The protein belongs to the secreted LysM effector family.

Non-secreted LysM effector that might be involved in manipulation of host defenses for successful infection. This chain is Non-secreted LysM effector LysM15, found in Penicillium expansum (Blue mold rot fungus).